The chain runs to 314 residues: Endo-beta-N-acetylglucosaminidase (314 aa).

The N-terminal stretch at 1 to 47 (MQFGIVAAIADGGRTARAGGSVRPPRRPPASHTAWGLPRGRPTGQPH) is a signal peptide. Positions 14-54 (RTARAGGSVRPPRRPPASHTAWGLPRGRPTGQPHATPTKSG) are disordered. The GH18 domain occupies 55–309 (PTSIAYVEVN…SSMTKVLYGQ (255 aa)). The active-site Proton donor is E175.

Belongs to the glycosyl hydrolase 18 family. As to quaternary structure, monomer.

The protein localises to the secreted. The catalysed reaction is an N(4)-(oligosaccharide-(1-&gt;3)-[oligosaccharide-(1-&gt;6)]-beta-D-Man-(1-&gt;4)-beta-D-GlcNAc-(1-&gt;4)-alpha-D-GlcNAc)-L-asparaginyl-[protein] + H2O = an oligosaccharide-(1-&gt;3)-[oligosaccharide-(1-&gt;6)]-beta-D-Man-(1-&gt;4)-D-GlcNAc + N(4)-(N-acetyl-beta-D-glucosaminyl)-L-asparaginyl-[protein]. Cleaves asparagine-linked oligomannose and hybrid, but not complex, oligosaccharides from glycoproteins. The chain is Endo-beta-N-acetylglucosaminidase from Flavobacterium sp. (strain SK1022).